Reading from the N-terminus, the 84-residue chain is Large ribosomal subunit protein bL27 (84 aa).

Polar residues predominate over residues 1-11 (MATTKAGGSTK). Residues 1–20 (MATTKAGGSTKNGRDSHSKR) are disordered.

It belongs to the bacterial ribosomal protein bL27 family.

The protein is Large ribosomal subunit protein bL27 of Mycoplasmopsis synoviae (strain 53) (Mycoplasma synoviae).